The sequence spans 226 residues: Agamous-like MADS-box protein AP3 (226 aa).

An MADS-box domain is found at 1–61 (MARGKIEIKR…GKLHEYISPS (61 aa)). Positions 84–174 (YERMQENLKK…LHEFDARDRD (91 aa)) constitute a K-box domain.

In terms of tissue distribution, expressed during flower development in stamens and petals.

It is found in the nucleus. Functionally, probable transcription factor involved in flower development. In Vitis vinifera (Grape), this protein is Agamous-like MADS-box protein AP3.